Reading from the N-terminus, the 2241-residue chain is Large tegument protein deneddylase (2241 aa).

A deubiquitination activity region spans residues 1-238; it reads MKVTQASCHQ…IDLTGVVRES (238 aa). Positions 4–226 constitute a Peptidase C76 domain; it reads TQASCHQGDI…AARLVSTYRD (223 aa). Residues Cys-24, Asp-160, and His-162 contribute to the active site. A disordered region spans residues 239 to 314; sequence ADTAATTTTA…STTSKTLATA (76 aa). The segment covering 240-250 has biased composition (low complexity); sequence DTAATTTTAAP. Residues 251–268 show a composition bias toward pro residues; that stretch reads SLPPLPDPIVDPGCPPGV. A compositionally biased stretch (low complexity) spans 304–314; the sequence is PSTTSKTLATA. The segment at 327–331 is interaction with inner tegument protein; it reads SSAVP. 2 disordered regions span residues 1187 to 1230 and 2118 to 2152; these read MTET…PPAD and PIAR…DTSR. Composition is skewed to basic and acidic residues over residues 1190 to 1199 and 2142 to 2152; these read TSERLDRSLR and QIDHAQDDTSR.

This sequence belongs to the herpesviridae large tegument protein family. Interacts with host CUL1 and CUL4A; these interactions inhibit the E3 ligase activity of cullins. Interacts with inner tegument protein. Interacts with capsid vertex specific component CVC2. Interacts with the major capsid protein/MCP.

The protein resides in the virion tegument. It is found in the host cytoplasm. Its subcellular location is the host nucleus. The enzyme catalyses Thiol-dependent hydrolysis of ester, thioester, amide, peptide and isopeptide bonds formed by the C-terminal Gly of ubiquitin (a 76-residue protein attached to proteins as an intracellular targeting signal).. Functionally, large tegument protein that plays multiple roles in the viral cycle. During viral entry, remains associated with the capsid while most of the tegument is detached and participates in the capsid transport toward the host nucleus. Plays a role in the routing of the capsid at the nuclear pore complex and subsequent uncoating. Within the host nucleus, acts as a deneddylase and promotes the degradation of nuclear CRLs (cullin-RING ubiquitin ligases) and thereby stabilizes nuclear CRL substrates, while cytoplasmic CRLs remain unaffected. These modifications prevent host cell cycle S-phase progression and create a favorable environment allowing efficient viral genome replication. Participates later in the secondary envelopment of capsids. Indeed, plays a linker role for the association of the outer viral tegument to the capsids together with the inner tegument protein. The chain is Large tegument protein deneddylase (UL48) from Homo sapiens (Human).